Consider the following 289-residue polypeptide: Proteasome subunit beta (289 aa).

Positions 1-59 are cleaved as a propeptide — removed in mature form; by autocatalysis; the sequence is MEHTPRNAGFALPAAYMSTMTSSFIDFLKAEAPDLLPRARVENMPAVPGGGSAFEPPHG. T60 functions as the Nucleophile in the catalytic mechanism.

The protein belongs to the peptidase T1B family. As to quaternary structure, the 20S proteasome core is composed of 14 alpha and 14 beta subunits that assemble into four stacked heptameric rings, resulting in a barrel-shaped structure. The two inner rings, each composed of seven catalytic beta subunits, are sandwiched by two outer rings, each composed of seven alpha subunits. The catalytic chamber with the active sites is on the inside of the barrel. Has a gated structure, the ends of the cylinder being occluded by the N-termini of the alpha-subunits. Is capped by the proteasome-associated ATPase, ARC.

It is found in the cytoplasm. The enzyme catalyses Cleavage of peptide bonds with very broad specificity.. It functions in the pathway protein degradation; proteasomal Pup-dependent pathway. The formation of the proteasomal ATPase ARC-20S proteasome complex, likely via the docking of the C-termini of ARC into the intersubunit pockets in the alpha-rings, may trigger opening of the gate for substrate entry. Interconversion between the open-gate and close-gate conformations leads to a dynamic regulation of the 20S proteasome proteolysis activity. Functionally, component of the proteasome core, a large protease complex with broad specificity involved in protein degradation. This chain is Proteasome subunit beta, found in Saccharomonospora viridis (strain ATCC 15386 / DSM 43017 / JCM 3036 / CCUG 5913 / NBRC 12207 / NCIMB 9602 / P101) (Thermoactinomyces viridis).